The sequence spans 360 residues: Peptide chain release factor 1 (360 aa).

Gln-235 is modified (N5-methylglutamine). A disordered region spans residues Ala-284–Pro-313.

It belongs to the prokaryotic/mitochondrial release factor family. In terms of processing, methylated by PrmC. Methylation increases the termination efficiency of RF1.

It is found in the cytoplasm. In terms of biological role, peptide chain release factor 1 directs the termination of translation in response to the peptide chain termination codons UAG and UAA. This chain is Peptide chain release factor 1, found in Citrobacter koseri (strain ATCC BAA-895 / CDC 4225-83 / SGSC4696).